An 83-amino-acid chain; its full sequence is Salivary thrombin inhibitor anophelin (83 aa).

A signal peptide spans 1–22 (MANKLVLISLLCVVLVAKITQA). The interval 25-51 (QYAPGDEPSYDEDTDDSDKLVENDTSI) is disordered. Asn47 carries N-linked (GlcNAc...) asparagine glycosylation. The interval 54–83 (EDYAAIEASLSETFNTAADPGRRLGEGSKP) is sufficient for host thrombin inhibition. The interval 56–62 (YAAIEAS) is blocks exosite I of host thrombin. The tract at residues 64-83 (SETFNTAADPGRRLGEGSKP) is disordered. A blocks active site cleft of host thrombin in a reverse direction compared to substrates region spans residues 72-75 (DPGR). The span at 73–83 (PGRRLGEGSKP) shows a compositional bias: basic and acidic residues.

This sequence belongs to the anophelin family. As to quaternary structure, interacts with human F2 (thrombin); the interaction results in thrombin inhibition. Salivary gland (at protein level).

The protein resides in the secreted. Increasing concentration of NaCl decreases affinity for thrombin. In terms of biological role, salivary protein with anticoagulant activity that inhibits host thrombin (F2); binds to the proteinase in a reverse orientation (opposite to substrates). Inhibits thrombin-induced platelet aggregation. In Anopheles albimanus (New world malaria mosquito), this protein is Salivary thrombin inhibitor anophelin.